The following is a 123-amino-acid chain: rRNA-processing protein cgr-1 (123 aa).

The segment covering 1–13 (MSSTTTTTQTTSQ) has biased composition (low complexity). Disordered stretches follow at residues 1–47 (MSST…GLTS) and 85–123 (EKRAKKEEKERYEKMAEKMHKKRVERLKRKEKRNKLINS). The stretch at 49-110 (EKRAKERQLL…EKMHKKRVER (62 aa)) forms a coiled coil. Positions 85-102 (EKRAKKEEKERYEKMAEK) are enriched in basic and acidic residues. Over residues 103 to 123 (MHKKRVERLKRKEKRNKLINS) the composition is skewed to basic residues.

The protein belongs to the CGR1 family.

The protein localises to the nucleus. The protein resides in the nucleolus. Its function is as follows. Involved in nucleolar integrity and required for processing of the pre-rRNA for the 60S ribosome subunit. The sequence is that of rRNA-processing protein cgr-1 (cgr-1) from Neurospora crassa (strain ATCC 24698 / 74-OR23-1A / CBS 708.71 / DSM 1257 / FGSC 987).